Reading from the N-terminus, the 160-residue chain is SsrA-binding protein (160 aa).

It belongs to the SmpB family.

It is found in the cytoplasm. Its function is as follows. Required for rescue of stalled ribosomes mediated by trans-translation. Binds to transfer-messenger RNA (tmRNA), required for stable association of tmRNA with ribosomes. tmRNA and SmpB together mimic tRNA shape, replacing the anticodon stem-loop with SmpB. tmRNA is encoded by the ssrA gene; the 2 termini fold to resemble tRNA(Ala) and it encodes a 'tag peptide', a short internal open reading frame. During trans-translation Ala-aminoacylated tmRNA acts like a tRNA, entering the A-site of stalled ribosomes, displacing the stalled mRNA. The ribosome then switches to translate the ORF on the tmRNA; the nascent peptide is terminated with the 'tag peptide' encoded by the tmRNA and targeted for degradation. The ribosome is freed to recommence translation, which seems to be the essential function of trans-translation. This is SsrA-binding protein from Yersinia enterocolitica serotype O:8 / biotype 1B (strain NCTC 13174 / 8081).